We begin with the raw amino-acid sequence, 489 residues long: Serine/threonine-protein kinase BSK2 (489 aa).

Positions 1–30 (MGCLHSKTANLPSSDDPSAPNKPESVNGDQ) are disordered. G2 carries N-myristoyl glycine lipidation. Polar residues predominate over residues 7–16 (KTANLPSSDD). The Protein kinase domain occupies 56–322 (SCIVSEGGEK…QEEVASHVLM (267 aa)). ATP-binding positions include 62–70 (GGEKAPNVV) and K84. Catalysis depends on D178, which acts as the Proton acceptor.

This sequence belongs to the protein kinase superfamily. Ser/Thr protein kinase family. Phosphorylated by BRI1 upon brassinolide (BL) treatment.

Its subcellular location is the cell membrane. The enzyme catalyses L-seryl-[protein] + ATP = O-phospho-L-seryl-[protein] + ADP + H(+). It carries out the reaction L-threonyl-[protein] + ATP = O-phospho-L-threonyl-[protein] + ADP + H(+). Probable serine/threonine kinase that acts as a positive regulator of brassinosteroid (BR) signaling downstream of the receptor kinase BRI1. Mediates signal transduction from BRI1 by functioning as substrate of BRI1. This chain is Serine/threonine-protein kinase BSK2, found in Arabidopsis thaliana (Mouse-ear cress).